The primary structure comprises 365 residues: NADH-quinone oxidoreductase subunit D (365 aa).

The protein belongs to the complex I 49 kDa subunit family. NDH-1 is composed of 14 different subunits. Subunits NuoB, C, D, E, F, and G constitute the peripheral sector of the complex.

Its subcellular location is the cell membrane. It carries out the reaction a quinone + NADH + 5 H(+)(in) = a quinol + NAD(+) + 4 H(+)(out). In terms of biological role, NDH-1 shuttles electrons from NADH, via FMN and iron-sulfur (Fe-S) centers, to quinones in the respiratory chain. The immediate electron acceptor for the enzyme in this species is believed to be a menaquinone. Couples the redox reaction to proton translocation (for every two electrons transferred, four hydrogen ions are translocated across the cytoplasmic membrane), and thus conserves the redox energy in a proton gradient. This chain is NADH-quinone oxidoreductase subunit D, found in Carboxydothermus hydrogenoformans (strain ATCC BAA-161 / DSM 6008 / Z-2901).